Consider the following 181-residue polypeptide: Protoporphyrinogen IX dehydrogenase [quinone] (181 aa).

The 170-residue stretch at 3 to 172 folds into the Flavodoxin-like domain; the sequence is TLILFSTRDG…QVANFAREIA (170 aa). Residues 9–13 and 84–152 contribute to the FMN site; these read TRDGQ and FYSV…ETDT.

The protein belongs to the HemG family. The cofactor is FMN.

Its subcellular location is the cell inner membrane. It carries out the reaction protoporphyrinogen IX + 3 a menaquinone = protoporphyrin IX + 3 a menaquinol. The enzyme catalyses protoporphyrinogen IX + 3 a ubiquinone = protoporphyrin IX + 3 a ubiquinol. The catalysed reaction is protoporphyrinogen IX + 3 a quinone = protoporphyrin IX + 3 a quinol. It functions in the pathway porphyrin-containing compound metabolism; protoporphyrin-IX biosynthesis; protoporphyrin-IX from protoporphyrinogen-IX: step 1/1. Functionally, catalyzes the 6-electron oxidation of protoporphyrinogen IX to form protoporphyrin IX; under anaerobic conditions uses menaquinone as an electron acceptor, under aerobic condition uses ubiquinone as an electron acceptor. This Escherichia coli O157:H7 protein is Protoporphyrinogen IX dehydrogenase [quinone].